The chain runs to 1348 residues: Vascular endothelial growth factor receptor 2 (1348 aa).

Positions 1-20 (MELGPLRVLTVLLCLAPVFA) are cleaved as a signal peptide. Over 21–756 (GLFISMDQPT…GAEEKTNLEL (736 aa)) the chain is Extracellular. N-linked (GlcNAc...) asparagine glycosylation is found at N43, N47, N63, N93, N138, N153, N201, N240, N290, N310, N365, N386, N513, N556, N603, N613, N622, N666, N688, and N710. Ig-like C2-type domains are found at residues 43–106 (NDTL…GDSQ), 138–202 (NKTV…IDNE), 220–312 (DLTM…KNSS), 320–405 (PFIH…HTFT), 412–534 (PQIG…RVIS), 540–651 (GLEI…KHLT), and 658–744 (PRLV…AFFS). Residues C50 and C100 are joined by a disulfide bond. The cysteines at positions 145 and 195 are disulfide-linked. C241 and C299 form a disulfide bridge. C436 and C520 are oxidised to a cystine. A disulfide bridge links C561 with C633. Residues C679 and C728 are joined by a disulfide bond. The chain crosses the membrane as a helical span at residues 757–777 (IILVGTAVIAMFFWLLLVIIL). Residues 778–1348 (RTVKRANGGD…SPAPVASLPL (571 aa)) are Cytoplasmic-facing. The region spanning 825–1155 (LKLGKPLGRG…FSELVEHLGN (331 aa)) is the Protein kinase domain. ATP is bound by residues 831 to 839 (LGRGAFGQV) and K859. The segment covering 958 to 967 (ITSSQSSTSS) has biased composition (low complexity). Residues 958–983 (ITSSQSSTSSGFVEERSLSDVEEEDA) form a disordered region. D1021 acts as the Proton acceptor in catalysis. Y1047, Y1052, Y1168, and Y1207 each carry phosphotyrosine; by autocatalysis. A disordered region spans residues 1280–1302 (PSKSNESVMSEASNQTSGYQSGY).

Belongs to the protein kinase superfamily. Tyr protein kinase family. CSF-1/PDGF receptor subfamily. Autophosphorylated on tyrosine residues upon ligand binding. Autophosphorylation occurs in trans, i.e. one subunit of the dimeric receptor phosphorylates tyrosine residues on the other subunit. In terms of tissue distribution, in all endothelial tissues during onset of vascularization. In later development, present in lung, heart, intestine and skin.

Its subcellular location is the cell membrane. It is found in the cytoplasmic vesicle. It localises to the early endosome. The protein localises to the cell junction. The protein resides in the endoplasmic reticulum. It carries out the reaction L-tyrosyl-[protein] + ATP = O-phospho-L-tyrosyl-[protein] + ADP + H(+). With respect to regulation, present in an inactive conformation in the absence of bound ligand. Binding of VEGFA, VEGFC or VEGFD leads to dimerization and activation by autophosphorylation on tyrosine residues. Tyrosine-protein kinase that acts as a cell-surface receptor for VEGFA, VEGFC and/or VEGFD and plays an essential role in the regulation of angiogenesis and vascular development. Promotes proliferation, survival, migration and differentiation of endothelial cells. Promotes reorganization of the actin cytoskeleton. Binding of vascular growth factors leads to the activation of several signaling cascades. Activation of PLCG1 leads to the production of the cellular signaling molecules diacylglycerol and inositol 1,4,5-trisphosphate and the activation of protein kinase C. Mediates activation of MAPK1/ERK2, MAPK3/ERK1 and the MAP kinase signaling pathway, as well as of the AKT1 signaling pathway. Mediates phosphorylation of PIK3R1, the regulatory subunit of phosphatidylinositol 3-kinase, reorganization of the actin cytoskeleton and activation of PTK2/FAK1. Required for VEGFA-mediated induction of NOS2 and NOS3, leading to the production of the signaling molecule nitric oxide (NO) by endothelial cells. This is Vascular endothelial growth factor receptor 2 from Coturnix japonica (Japanese quail).